The sequence spans 510 residues: Thermostable carboxypeptidase 1 (510 aa).

In terms of domain architecture, Peptidase M32 spans 3-506 (PEAAYQNLLE…FLAYLEKKYA (504 aa)). The short motif at 245 to 247 (HPF) is the HPF element. The DXRXT motif lies at 255-259 (DVRIT). Residue histidine 276 coordinates Zn(2+). Positions 276–280 (HEMGH) match the HEXXH motif. Glutamate 277 functions as the Proton donor/acceptor in the catalytic mechanism. Residues histidine 280 and glutamate 306 each contribute to the Zn(2+) site. Residues 305–308 (HESQ) carry the HES/GQ motif. An I/NRXXA/SD motif is present at residues 357 to 362 (IRVEAD). Positions 412–419 (GVMQDVHW) match the GXXQDXHW motif.

It belongs to the peptidase M32 family. As to quaternary structure, homodimer. It depends on Zn(2+) as a cofactor.

The enzyme catalyses Release of a C-terminal amino acid with broad specificity, except for -Pro.. Broad specificity carboxypetidase that releases amino acids sequentially from the C-terminus, including neutral, aromatic, polar and basic residues, but not Pro. Has lower activity with substrates ending with Gly or Glu. The polypeptide is Thermostable carboxypeptidase 1 (Thermus thermophilus (strain ATCC 27634 / DSM 579 / HB8)).